The sequence spans 451 residues: Phosphoglucosamine mutase (451 aa).

Serine 101 serves as the catalytic Phosphoserine intermediate. 4 residues coordinate Mg(2+): serine 101, aspartate 240, aspartate 242, and aspartate 244. Serine 101 is modified (phosphoserine).

It belongs to the phosphohexose mutase family. Mg(2+) serves as cofactor. Activated by phosphorylation.

The catalysed reaction is alpha-D-glucosamine 1-phosphate = D-glucosamine 6-phosphate. Its function is as follows. Catalyzes the conversion of glucosamine-6-phosphate to glucosamine-1-phosphate. The polypeptide is Phosphoglucosamine mutase (Streptococcus pyogenes serotype M18 (strain MGAS8232)).